Here is a 424-residue protein sequence, read N- to C-terminus: Serine--tRNA ligase (424 aa).

231-233 (TAE) serves as a coordination point for L-serine. 261–263 (RSE) serves as a coordination point for ATP. Glu-284 contributes to the L-serine binding site. 348–351 (ETSS) is a binding site for ATP. Residue Ser-383 participates in L-serine binding.

Belongs to the class-II aminoacyl-tRNA synthetase family. Type-1 seryl-tRNA synthetase subfamily. As to quaternary structure, homodimer. The tRNA molecule binds across the dimer.

Its subcellular location is the cytoplasm. The catalysed reaction is tRNA(Ser) + L-serine + ATP = L-seryl-tRNA(Ser) + AMP + diphosphate + H(+). The enzyme catalyses tRNA(Sec) + L-serine + ATP = L-seryl-tRNA(Sec) + AMP + diphosphate + H(+). It participates in aminoacyl-tRNA biosynthesis; selenocysteinyl-tRNA(Sec) biosynthesis; L-seryl-tRNA(Sec) from L-serine and tRNA(Sec): step 1/1. Functionally, catalyzes the attachment of serine to tRNA(Ser). Is also able to aminoacylate tRNA(Sec) with serine, to form the misacylated tRNA L-seryl-tRNA(Sec), which will be further converted into selenocysteinyl-tRNA(Sec). This chain is Serine--tRNA ligase, found in Metamycoplasma arthritidis (strain 158L3-1) (Mycoplasma arthritidis).